The primary structure comprises 1001 residues: Transcription-repair-coupling factor (1001 aa).

The 160-residue stretch at 499-658 folds into the Helicase ATP-binding domain; sequence DLSSHRVMDR…LSQIKGISSL (160 aa). An ATP-binding site is contributed by 512 to 519; that stretch reads GDVGFGKT. Positions 611 to 614 match the DEEH box motif; sequence DEEH. Residues 679 to 835 enclose the Helicase C-terminal domain; that stretch reads LLKEIIYREL…SIAYHDLEIR (157 aa).

The protein in the N-terminal section; belongs to the UvrB family. In the C-terminal section; belongs to the helicase family. RecG subfamily.

The protein resides in the cytoplasm. Its function is as follows. Couples transcription and DNA repair by recognizing RNA polymerase (RNAP) stalled at DNA lesions. Mediates ATP-dependent release of RNAP and its truncated transcript from the DNA, and recruitment of nucleotide excision repair machinery to the damaged site. The protein is Transcription-repair-coupling factor of Helicobacter pylori (strain J99 / ATCC 700824) (Campylobacter pylori J99).